We begin with the raw amino-acid sequence, 352 residues long: Maleylacetate reductase (352 aa).

The protein belongs to the iron-containing alcohol dehydrogenase family.

The enzyme catalyses 3-oxoadipate + NAD(+) = maleylacetate + NADH + H(+). It catalyses the reaction 3-oxoadipate + NADP(+) = maleylacetate + NADPH + H(+). The protein operates within xenobiotic degradation; (2,4,5-trichlorophenoxy)acetate degradation. This is Maleylacetate reductase (tftE) from Burkholderia cepacia (Pseudomonas cepacia).